The following is a 273-amino-acid chain: Large ribosomal subunit protein uL2 (273 aa).

A disordered region spans residues Val-228–Lys-273. Residues Lys-254 to Lys-273 show a composition bias toward basic residues.

This sequence belongs to the universal ribosomal protein uL2 family. Part of the 50S ribosomal subunit. Forms a bridge to the 30S subunit in the 70S ribosome.

Its function is as follows. One of the primary rRNA binding proteins. Required for association of the 30S and 50S subunits to form the 70S ribosome, for tRNA binding and peptide bond formation. It has been suggested to have peptidyltransferase activity; this is somewhat controversial. Makes several contacts with the 16S rRNA in the 70S ribosome. The protein is Large ribosomal subunit protein uL2 of Rickettsia prowazekii (strain Madrid E).